Here is a 528-residue protein sequence, read N- to C-terminus: Peptide chain release factor 3 (528 aa).

In terms of domain architecture, tr-type G spans 10-278 (DRRRTFGIIS…AFVEQAPVPR (269 aa)). Residues 19-26 (SHPDAGKT), 87-91 (DTPGH), and 141-144 (NKLD) each bind GTP.

It belongs to the TRAFAC class translation factor GTPase superfamily. Classic translation factor GTPase family. PrfC subfamily.

It localises to the cytoplasm. Increases the formation of ribosomal termination complexes and stimulates activities of RF-1 and RF-2. It binds guanine nucleotides and has strong preference for UGA stop codons. It may interact directly with the ribosome. The stimulation of RF-1 and RF-2 is significantly reduced by GTP and GDP, but not by GMP. The polypeptide is Peptide chain release factor 3 (Syntrophotalea carbinolica (strain DSM 2380 / NBRC 103641 / GraBd1) (Pelobacter carbinolicus)).